The following is a 73-amino-acid chain: uncharacterized protein (73 aa).

A signal peptide spans 1–23 (MLHLIKMVSKIVLLITLVFIVSA).

This is an uncharacterized protein from Acheta domesticus (House cricket).